Here is a 418-residue protein sequence, read N- to C-terminus: Beta-arrestin-1 (418 aa).

Residues M1–S163 are interaction with SRC. Residues P45–S86 are interaction with CHRM2. Residue Y47 is modified to Phosphotyrosine. K250, M255, K324, and K326 together coordinate 1D-myo-inositol hexakisphosphate. The interval I318 to R418 is interaction with TRAF6. 2 disordered regions span residues H353 to N375 and K397 to R418. A compositionally biased stretch (basic and acidic residues) spans K355–P366. S412 carries the post-translational modification Phosphoserine.

Belongs to the arrestin family. In terms of assembly, monomer. Homodimer. Homooligomer; the self-association is mediated by InsP6-binding. Heterooligomer with ARRB2; the association is mediated by InsP6-binding. Interacts with ADRB2 (phosphorylated). Interacts with CHRM2 (phosphorylated). Interacts with LHCGR. Interacts with CYTH2 and CASR. Interacts with AP2B1 (dephosphorylated); phosphorylation of AP2B1 disrupts the interaction. Interacts (dephosphorylated at Ser-412) with CLTC. Interacts with CCR2 and GRK2. Interacts with CRR5. Interacts with PTAFR (phosphorylated on serine residues). Interacts with CLTC and MAP2K3. Interacts with CREB1. Interacts with TRAF6. Interacts with IGF1R and MDM2. Interacts with C5AR1. Interacts with PDE4D. Interacts with SRC (via the SH3 domain and the protein kinase domain); the interaction is independent of the phosphorylation state of SRC C-terminus. Interacts with TACR1. Interacts with RAF1. Interacts with DVL1; the interaction is enhanced by phosphorylation of DVL1. Interacts with DVL2; the interaction is enhanced by phosphorylation of DVL2. Interacts with IGF1R. Interacts with CHUK, IKBKB and MAP3K14. Associates with MAP kinase p38. Part of a MAPK signaling complex consisting of TACR1, ARRB1, SRC, MAPK1 (activated) and MAPK3 (activated). Part of a MAPK signaling complex consisting of F2RL1, ARRB1, RAF1, MAPK1 (activated) and MAPK3 (activated). Interacts with GPR143. Interacts with MAP2K4/MKK4. Interacts with HCK and CXCR1 (phosphorylated). Interacts with ACKR3 and ACKR4. Interacts with ARRDC1; the interaction is direct. Interacts with GPR61, GPR62 and GPR135. In terms of processing, constitutively phosphorylated at in the cytoplasm. At the plasma membrane, is rapidly dephosphorylated, a process that is required for clathrin binding and ADRB2 endocytosis but not for ADRB2 binding and desensitization. Once internalized, is rephosphorylated. The ubiquitination status appears to regulate the formation and trafficking of beta-arrestin-GPCR complexes and signaling. Ubiquitination appears to occur GPCR-specific. Ubiquitinated by MDM2; the ubiquitination is required for rapid internalization of ADRB2. Deubiquitinated by USP33; the deubiquitination leads to a dissociation of the beta-arrestin-GPCR complex. Stimulation of a class A GPCR, such as ADRB2, induces transient ubiquitination and subsequently promotes association with USP33.

The protein resides in the cytoplasm. It localises to the nucleus. Its subcellular location is the cell membrane. It is found in the membrane. The protein localises to the clathrin-coated pit. The protein resides in the cell projection. It localises to the pseudopodium. Its subcellular location is the cytoplasmic vesicle. Its function is as follows. Functions in regulating agonist-mediated G-protein coupled receptor (GPCR) signaling by mediating both receptor desensitization and resensitization processes. During homologous desensitization, beta-arrestins bind to the GPRK-phosphorylated receptor and sterically preclude its coupling to the cognate G-protein; the binding appears to require additional receptor determinants exposed only in the active receptor conformation. The beta-arrestins target many receptors for internalization by acting as endocytic adapters (CLASPs, clathrin-associated sorting proteins) and recruiting the GPRCs to the adapter protein 2 complex 2 (AP-2) in clathrin-coated pits (CCPs). However, the extent of beta-arrestin involvement appears to vary significantly depending on the receptor, agonist and cell type. Internalized arrestin-receptor complexes traffic to intracellular endosomes, where they remain uncoupled from G-proteins. Two different modes of arrestin-mediated internalization occur. Class A receptors, like ADRB2, OPRM1, ENDRA, D1AR and ADRA1B dissociate from beta-arrestin at or near the plasma membrane and undergo rapid recycling. Class B receptors, like AVPR2, AGTR1, NTSR1, TRHR and TACR1 internalize as a complex with arrestin and traffic with it to endosomal vesicles, presumably as desensitized receptors, for extended periods of time. Receptor resensitization then requires that receptor-bound arrestin is removed so that the receptor can be dephosphorylated and returned to the plasma membrane. Involved in internalization of P2RY4 and UTP-stimulated internalization of P2RY2. Involved in phosphorylation-dependent internalization of OPRD1 ands subsequent recycling. Involved in the degradation of cAMP by recruiting cAMP phosphodiesterases to ligand-activated receptors. Beta-arrestins function as multivalent adapter proteins that can switch the GPCR from a G-protein signaling mode that transmits short-lived signals from the plasma membrane via small molecule second messengers and ion channels to a beta-arrestin signaling mode that transmits a distinct set of signals that are initiated as the receptor internalizes and transits the intracellular compartment. Acts as a signaling scaffold for MAPK pathways such as MAPK1/3 (ERK1/2). ERK1/2 activated by the beta-arrestin scaffold is largely excluded from the nucleus and confined to cytoplasmic locations such as endocytic vesicles, also called beta-arrestin signalosomes. Recruits c-Src/SRC to ADRB2 resulting in ERK activation. GPCRs for which the beta-arrestin-mediated signaling relies on both ARRB1 and ARRB2 (codependent regulation) include ADRB2, F2RL1 and PTH1R. For some GPCRs the beta-arrestin-mediated signaling relies on either ARRB1 or ARRB2 and is inhibited by the other respective beta-arrestin form (reciprocal regulation). Inhibits ERK1/2 signaling in AGTR1- and AVPR2-mediated activation (reciprocal regulation). Is required for SP-stimulated endocytosis of NK1R and recruits c-Src/SRC to internalized NK1R resulting in ERK1/2 activation, which is required for the antiapoptotic effects of SP. Is involved in proteinase-activated F2RL1-mediated ERK activity. Acts as a signaling scaffold for the AKT1 pathway. Is involved in alpha-thrombin-stimulated AKT1 signaling. Is involved in IGF1-stimulated AKT1 signaling leading to increased protection from apoptosis. Involved in activation of the p38 MAPK signaling pathway and in actin bundle formation. Involved in F2RL1-mediated cytoskeletal rearrangement and chemotaxis. Involved in AGTR1-mediated stress fiber formation by acting together with GNAQ to activate RHOA. Appears to function as signaling scaffold involved in regulation of MIP-1-beta-stimulated CCR5-dependent chemotaxis. Involved in attenuation of NF-kappa-B-dependent transcription in response to GPCR or cytokine stimulation by interacting with and stabilizing CHUK. May serve as nuclear messenger for GPCRs. Involved in OPRD1-stimulated transcriptional regulation by translocating to CDKN1B and FOS promoter regions and recruiting EP300 resulting in acetylation of histone H4. Involved in regulation of LEF1 transcriptional activity via interaction with DVL1 and/or DVL2 Also involved in regulation of receptors other than GPCRs. Involved in Toll-like receptor and IL-1 receptor signaling through the interaction with TRAF6 which prevents TRAF6 autoubiquitination and oligomerization required for activation of NF-kappa-B and JUN. Involved in IL8-mediated granule release in neutrophils. Binds phosphoinositides. Binds inositolhexakisphosphate (InsP6). Required for atypical chemokine receptor ACKR2-induced RAC1-LIMK1-PAK1-dependent phosphorylation of cofilin (CFL1) and for the up-regulation of ACKR2 from endosomal compartment to cell membrane, increasing its efficiency in chemokine uptake and degradation. Involved in the internalization of the atypical chemokine receptor ACKR3. Negatively regulates the NOTCH signaling pathway by mediating the ubiquitination and degradation of NOTCH1 by ITCH. Participates in the recruitment of the ubiquitin-protein ligase to the receptor. This chain is Beta-arrestin-1 (Arrb1), found in Mus musculus (Mouse).